Here is a 1072-residue protein sequence, read N- to C-terminus: Vacuolar membrane protease (1072 aa).

Residues 1–9 (MINPISFRP) are Cytoplasmic-facing. A helical transmembrane segment spans residues 10-30 (GPVTFWTTLIYLALLIPIVII). The Vacuolar portion of the chain corresponds to 31–404 (NEKTPAAPKT…SFVLFGLRGM (374 aa)). Asn-48, Asn-116, Asn-119, and Asn-128 each carry an N-linked (GlcNAc...) asparagine glycan. 2 residues coordinate Zn(2+): His-185 and Asp-197. The active-site Proton acceptor is the Glu-231. Residues Glu-232, Glu-257, and His-330 each coordinate Zn(2+). A helical transmembrane segment spans residues 405–425 (FAWSLTLLIATPLVLVGITWL). At 426 to 457 (LRNLDKDYFFTSTVKTKEHPEYEAVPIGGWKG) the chain is on the cytoplasmic side. A helical membrane pass occupies residues 458-478 (FFRFPFALGVAVFFTISSALL). The Vacuolar segment spans residues 479-492 (MNKVNPLIVYSSRY). Residues 493–513 (SVWVMMVSIFYFSFWMIMRGA) traverse the membrane as a helical segment. The Cytoplasmic portion of the chain corresponds to 514–523 (NFVRPSALHR). Residues 524–544 (GYANLWLFVFGWIVLVAVTAL) form a helical membrane-spanning segment. Residues 545 to 554 (EDRRRIAAGY) are Vacuolar-facing. The chain crosses the membrane as a helical span at residues 555 to 575 (IFVFLESAIFLSCLISFVELL). At 576–747 (AVPRKSSYAL…YDHEQEWSGH (172 aa)) the chain is on the cytoplasmic side. The segment at 593–713 (GQEHDHNGYQ…GTNDRGRTTF (121 aa)) is disordered. The segment covering 606–617 (DSTDEPSLRARA) has biased composition (basic and acidic residues). Residues 643–661 (GTTNGLSTAPSVAAHSSQP) are compositionally biased toward polar residues. The helical transmembrane segment at 748 to 768 (LPSWAWFFQFLLLGPFMIILA) threads the bilayer. Topologically, residues 769-789 (AQTGLMLTDAVYQTGSDGSKL) are vacuolar. A helical membrane pass occupies residues 790–810 (ITPYLIIFVFTVLLILPLTPF). Residues 811 to 817 (IHRVTHH) are Cytoplasmic-facing. The helical transmembrane segment at 818-838 (IPVFLLVVFIVTLTYNLIAFP) threads the bilayer. Topologically, residues 839-1072 (FSANNRYKTF…VEGRKAFKIV (234 aa)) are vacuolar. Residues Asn-932 and Asn-974 are each glycosylated (N-linked (GlcNAc...) asparagine).

The protein belongs to the peptidase M28 family. Requires Zn(2+) as cofactor.

It localises to the vacuole membrane. May be involved in vacuolar sorting and osmoregulation. The protein is Vacuolar membrane protease of Neurospora crassa (strain ATCC 24698 / 74-OR23-1A / CBS 708.71 / DSM 1257 / FGSC 987).